Here is a 487-residue protein sequence, read N- to C-terminus: GTPase Der (487 aa).

EngA-type G domains follow at residues 5–169 and 178–351; these read PKLA…SREI and IKVA…ANSQ. GTP-binding positions include 11-18, 58-62, 121-124, 184-191, 231-235, and 296-299; these read GRPNVGKS, DTGGI, NKID, GRANVGKS, DTAGI, and NKWD. One can recognise a KH-like domain in the interval 352–439; the sequence is KRITTHQLNK…IHLKGKTKKD (88 aa). A disordered region spans residues 441-466; that stretch reads PVSSLSLTRKQTKSTDQENNEYDELY.

This sequence belongs to the TRAFAC class TrmE-Era-EngA-EngB-Septin-like GTPase superfamily. EngA (Der) GTPase family. In terms of assembly, associates with the 50S ribosomal subunit.

Functionally, GTPase that plays an essential role in the late steps of ribosome biogenesis. The protein is GTPase Der of Protochlamydia amoebophila (strain UWE25).